The following is a 299-amino-acid chain: Nucleoporin POM34 (299 aa).

The tract at residues Met-1–Leu-39 is disordered. Residues Lys-25–Thr-34 show a composition bias toward polar residues. Transmembrane regions (helical) follow at residues Ile-64–Phe-84 and Leu-133–Val-153. Ser-270 is subject to Phosphoserine. A Phosphothreonine modification is found at Thr-273. Phosphoserine occurs at positions 292 and 294.

As to quaternary structure, component of the nuclear pore complex (NPC). NPC constitutes the exclusive means of nucleocytoplasmic transport. NPCs allow the passive diffusion of ions and small molecules and the active, nuclear transport receptor-mediated bidirectional transport of macromolecules such as proteins, RNAs, ribonucleoparticles (RNPs), and ribosomal subunits across the nuclear envelope. Due to its 8-fold rotational symmetry, all subunits are present with 8 copies or multiples thereof.

The protein resides in the nucleus. It is found in the nuclear pore complex. It localises to the nucleus membrane. Functions as a component of the nuclear pore complex (NPC). NPC components, collectively referred to as nucleoporins (NUPs), can play the role of both NPC structural components and of docking or interaction partners for transiently associated nuclear transport factors. The protein is Nucleoporin POM34 (POM34) of Saccharomyces cerevisiae (strain ATCC 204508 / S288c) (Baker's yeast).